We begin with the raw amino-acid sequence, 803 residues long: Volume-regulated anion channel subunit LRRC8C (803 aa).

The Cytoplasmic portion of the chain corresponds to 1–22 (MIPVTEFRQFSEQQPAFRVLKP). Residues 23–43 (WWDVFTDYLSVAMLMIGVFGC) traverse the membrane as a helical segment. Over 44–125 (TLQVMQDKII…YERALHWYAK (82 aa)) the chain is Extracellular. Intrachain disulfides connect Cys54–Cys308 and Cys115–Cys293. Residues Asn64 and Asn70 are each glycosylated (N-linked (GlcNAc...) asparagine). A helical membrane pass occupies residues 126–146 (YFPYLVLIHTLVFMLCSNFWF). At 147–266 (KFPGSSSKIE…ILYAMYVRQT (120 aa)) the chain is on the cytoplasmic side. The tract at residues 177–211 (EVSGEDSEEKDNRKNNMNRSNTIQSGPEGSLVKSQ) is disordered. Over residues 191 to 211 (NNMNRSNTIQSGPEGSLVKSQ) the composition is skewed to polar residues. Phosphoserine is present on residues Ser212 and Ser215. The chain crosses the membrane as a helical span at residues 267–287 (VLKVIKFLIIIAYNSALVSKV). Residues 288–320 (QFTVDCNVDIQDMTGYKNFSCNHTMAHLFSKLS) lie on the Extracellular side of the membrane. The chain crosses the membrane as a helical span at residues 321–341 (FCYLCFVSIYGLTCLYTLYWL). Residues 342–803 (FYRSLREYSF…SDVREQMKAD (462 aa)) lie on the Cytoplasmic side of the membrane. LRR repeat units lie at residues 397 to 420 (ENKL…KLQT), 421 to 443 (NAHN…VFEI), 446 to 466 (LQSL…IAQL), 467 to 488 (DNLQ…ALSF), 490 to 513 (KENL…MYGL), 515 to 537 (NLEE…TLES), 541 to 563 (LKSL…VVDV), 565 to 587 (SHLQ…NLKK), 588 to 611 (MTNL…VFSL), 613 to 635 (SLQE…SFQH), 637 to 659 (RKLT…IKKL), 660 to 682 (TSLE…LFLC), 684 to 705 (KIRY…IGVL), 706 to 728 (QSLQ…LYFC), 730 to 751 (KLKT…IGNL), 752 to 774 (LFLS…LGDC), and 776 to 799 (ALKR…VREQ).

The protein belongs to the LRRC8 family. Heterohexamer; oligomerizes with other LRRC8 proteins (LRRC8A, LRRC8B, LRRC8D and/or LRRC8E) to form a heterohexamer. Homoheptamer; inactive, likely because it is not targeted to the plasma membrane in the absence of LRRC8A. In vivo, the subunit composition may depend primarily on expression levels, and heterooligomeric channels containing various proportions of the different LRRC8 proteins may coexist.

The protein resides in the cell membrane. It localises to the endoplasmic reticulum membrane. The catalysed reaction is chloride(in) = chloride(out). It carries out the reaction iodide(out) = iodide(in). The enzyme catalyses taurine(out) = taurine(in). It catalyses the reaction 2',3'-cGAMP(out) = 2',3'-cGAMP(in). Functionally, non-essential component of the volume-regulated anion channel (VRAC, also named VSOAC channel), an anion channel required to maintain a constant cell volume in response to extracellular or intracellular osmotic changes. The VRAC channel conducts iodide better than chloride and can also conduct organic osmolytes like taurine. Plays a redundant role in the efflux of amino acids, such as aspartate and glutamate, in response to osmotic stress. The VRAC channel also mediates transport of immunoreactive cyclic dinucleotide GMP-AMP (2'-3'-cGAMP), an immune messenger produced in response to DNA virus in the cytosol. Channel activity requires LRRC8A plus at least one other family member (LRRC8B, LRRC8C, LRRC8D or LRRC8E); channel characteristics depend on the precise subunit composition. The sequence is that of Volume-regulated anion channel subunit LRRC8C from Rattus norvegicus (Rat).